Here is a 236-residue protein sequence, read N- to C-terminus: 7-cyano-7-deazaguanine synthase (236 aa).

An ATP-binding site is contributed by 7-17 (CSGGLDSVSLA). Zn(2+) contacts are provided by cysteine 185, cysteine 193, cysteine 196, and cysteine 199.

This sequence belongs to the QueC family. The cofactor is Zn(2+).

The enzyme catalyses 7-carboxy-7-deazaguanine + NH4(+) + ATP = 7-cyano-7-deazaguanine + ADP + phosphate + H2O + H(+). It functions in the pathway purine metabolism; 7-cyano-7-deazaguanine biosynthesis. In terms of biological role, catalyzes the ATP-dependent conversion of 7-carboxy-7-deazaguanine (CDG) to 7-cyano-7-deazaguanine (preQ(0)). This chain is 7-cyano-7-deazaguanine synthase, found in Rhizobium rhizogenes (strain K84 / ATCC BAA-868) (Agrobacterium radiobacter).